We begin with the raw amino-acid sequence, 334 residues long: Gap junction alpha-2 protein (334 aa).

Residues 1–12 (MAGWELLKLLLD) are Cytoplasmic-facing. Residues 13–35 (DVQEHSTLIGKVWLTVLFIFRIF) traverse the membrane as a helical segment. At 36-75 (ILSVAGESVWTDEQSDFICNTQQPGCTNVCYDQAFPISHV) the chain is on the extracellular side. A helical membrane pass occupies residues 76-98 (RYWVLQFLFVSTPTLIYLGHMVY). The Cytoplasmic segment spans residues 99-153 (LSKKEEKERQKENESRILVANEAQTEVHSSATKKIRIQGPLMCTYTTSVVFKSIF). A helical transmembrane segment spans residues 154–176 (EAGFLLGQWYIYGFVMSPIFVCE). The Extracellular segment spans residues 177–207 (RIPCKHKVECFVSRPMEKTIFIIFMLVVSLI). The chain crosses the membrane as a helical span at residues 208–230 (SLLLNLMELIHLSFKCFQHGIKE). Residues 231 to 334 (GATCSPTGIP…HQTSSKQQYV (104 aa)) lie on the Cytoplasmic side of the membrane.

It belongs to the connexin family. Alpha-type (group II) subfamily. A connexon is composed of a hexamer of connexins. As to expression, resides primarily in the ovary, oocytes and early embryos.

The protein localises to the cell membrane. Its subcellular location is the cell junction. It is found in the gap junction. One gap junction consists of a cluster of closely packed pairs of transmembrane channels, the connexons, through which materials of low MW diffuse from one cell to a neighboring cell. The sequence is that of Gap junction alpha-2 protein (gja2) from Xenopus laevis (African clawed frog).